The sequence spans 484 residues: Replication factor C large subunit (484 aa).

46-53 contributes to the ATP binding site; sequence GPPGSGKT. Basic and acidic residues predominate over residues 463–478; it reads NADTKEKEKKDPKKQA. Residues 463–484 are disordered; that stretch reads NADTKEKEKKDPKKQATLDSFF.

This sequence belongs to the activator 1 small subunits family. RfcL subfamily. In terms of assembly, heteromultimer composed of small subunits (RfcS) and large subunits (RfcL).

Its function is as follows. Part of the RFC clamp loader complex which loads the PCNA sliding clamp onto DNA. In Methanococcus maripaludis (strain C6 / ATCC BAA-1332), this protein is Replication factor C large subunit.